Reading from the N-terminus, the 336-residue chain is Flap endonuclease 1 (336 aa).

An N-domain region spans residues 1-98; it reads MGADIGDLFE…AEIEERKKRR (98 aa). Mg(2+) contacts are provided by D27, D80, E151, E153, D172, D174, and D235. An I-domain region spans residues 115 to 256; that stretch reads DAKKYAQAAG…KALNYIKTYG (142 aa). Positions 328 to 336 are interaction with PCNA; that stretch reads TQATLERWF.

It belongs to the XPG/RAD2 endonuclease family. FEN1 subfamily. Interacts with PCNA. PCNA stimulates the nuclease activity without altering cleavage specificity. Mg(2+) serves as cofactor.

Functionally, structure-specific nuclease with 5'-flap endonuclease and 5'-3' exonuclease activities involved in DNA replication and repair. During DNA replication, cleaves the 5'-overhanging flap structure that is generated by displacement synthesis when DNA polymerase encounters the 5'-end of a downstream Okazaki fragment. Binds the unpaired 3'-DNA end and kinks the DNA to facilitate 5' cleavage specificity. Cleaves one nucleotide into the double-stranded DNA from the junction in flap DNA, leaving a nick for ligation. Also involved in the base excision repair (BER) pathway. Acts as a genome stabilization factor that prevents flaps from equilibrating into structures that lead to duplications and deletions. Also possesses 5'-3' exonuclease activity on nicked or gapped double-stranded DNA. This Archaeoglobus fulgidus (strain ATCC 49558 / DSM 4304 / JCM 9628 / NBRC 100126 / VC-16) protein is Flap endonuclease 1.